The chain runs to 301 residues: UDP-N-acetylenolpyruvoylglucosamine reductase 1 (301 aa).

The FAD-binding PCMH-type domain occupies 29–196; that stretch reads KIGGPADILI…LEAEFQLQIG (168 aa). The active site involves Arg174. Ser225 functions as the Proton donor in the catalytic mechanism. Glu295 is a catalytic residue.

Belongs to the MurB family. It depends on FAD as a cofactor.

It localises to the cytoplasm. The catalysed reaction is UDP-N-acetyl-alpha-D-muramate + NADP(+) = UDP-N-acetyl-3-O-(1-carboxyvinyl)-alpha-D-glucosamine + NADPH + H(+). Its pathway is cell wall biogenesis; peptidoglycan biosynthesis. Its function is as follows. Cell wall formation. The polypeptide is UDP-N-acetylenolpyruvoylglucosamine reductase 1 (Bacillus thuringiensis subsp. konkukian (strain 97-27)).